The sequence spans 410 residues: MMGKSVWVFAALFPAVLAADIYVSPDGSDDAAGTIDAPLQSIQLAVDQATAGSTIYLRGGTYTPTSNIQITKSGTASAPYVLRAYEGESVIIDGEELPGTPADLDASLDNADRGILHIQDAEYWEFYDLELINGPYGVYARDASNNHYERITTRNNYETGFQLQGESSNNVVLYLDSYGNRDPRKNGESADGFACKEGSGEGNILRGARLWNNVDDGLDLWYAVNPVHPRISANTSREFKSAVTIEDTIAWGNGFNRWDFTPFEGDGNGFKLGGGDDTDIGPADHIITNCIAFSNAKDGFTDNSQPGNFVLTRNTAWDNTAVGFKFGTAVATLTGNIAASNGEAPTSLSDEQISDGNSWDGDEDWDDGSFVSVDVSLVQGERNADGTIEPSGFLLPADGEEIGATTDWSA.

The first 18 residues, 1–18, serve as a signal peptide directing secretion; the sequence is MMGKSVWVFAALFPAVLA. Ca(2+) contacts are provided by Asp191, Asp215, Asp216, and Asp219. A glycan (N-linked (GlcNAc...) asparagine) is linked at Asn234. The Proton acceptor role is filled by Lys271. The segment covering 342-351 has biased composition (polar residues); the sequence is GEAPTSLSDE. 2 disordered regions span residues 342–361 and 381–410; these read GEAPTSLSDEQISDGNSWDG and ERNADGTIEPSGFLLPADGEEIGATTDWSA.

Belongs to the polysaccharide lyase 9 family. Ca(2+) is required as a cofactor.

It localises to the secreted. It catalyses the reaction Eliminative cleavage of (1-&gt;4)-alpha-D-galacturonan to give oligosaccharides with 4-deoxy-alpha-D-galact-4-enuronosyl groups at their non-reducing ends.. Its activity is regulated as follows. Inhibited by iron ions. Activated in presence of the surfactant polysorbate 20, while inhibited in the presence of Triton X-100 and sodium dodecyl sulfate. Inhibited in presence of the organic solvents methanol, ethanol, propan-2-ol and acetone. In terms of biological role, presents an endo-cleaving activity on the homogalacturonan (HG) region in pectin. Active on homogalacturonan with a degree of polymerization above 4, and does not appear to be affected by the degree of methylation of the substrate. Does not degrade linear rhamnogalacturonan. In Emericella nidulans (strain FGSC A4 / ATCC 38163 / CBS 112.46 / NRRL 194 / M139) (Aspergillus nidulans), this protein is Pectate lyase PEL9.